The sequence spans 398 residues: 1-deoxy-D-xylulose 5-phosphate reductoisomerase (398 aa).

NADPH contacts are provided by Thr13, Gly14, Ser15, Ile16, Arg40, and Asn127. Residue Lys128 participates in 1-deoxy-D-xylulose 5-phosphate binding. Glu129 is a binding site for NADPH. A Mn(2+)-binding site is contributed by Asp153. Positions 154, 155, 188, and 211 each coordinate 1-deoxy-D-xylulose 5-phosphate. Mn(2+) is bound at residue Glu155. Residue Gly217 participates in NADPH binding. 1-deoxy-D-xylulose 5-phosphate-binding residues include Ser224, Asn229, Lys230, and Glu233. Glu233 contacts Mn(2+).

It belongs to the DXR family. It depends on Mg(2+) as a cofactor. Requires Mn(2+) as cofactor.

The catalysed reaction is 2-C-methyl-D-erythritol 4-phosphate + NADP(+) = 1-deoxy-D-xylulose 5-phosphate + NADPH + H(+). Its pathway is isoprenoid biosynthesis; isopentenyl diphosphate biosynthesis via DXP pathway; isopentenyl diphosphate from 1-deoxy-D-xylulose 5-phosphate: step 1/6. In terms of biological role, catalyzes the NADPH-dependent rearrangement and reduction of 1-deoxy-D-xylulose-5-phosphate (DXP) to 2-C-methyl-D-erythritol 4-phosphate (MEP). This Cellvibrio japonicus (strain Ueda107) (Pseudomonas fluorescens subsp. cellulosa) protein is 1-deoxy-D-xylulose 5-phosphate reductoisomerase.